The primary structure comprises 177 residues: MTNTCTPNHKSSYTYEDLLASGRGELFGPKGPQLPAPTMLMMDRVIEMNETGGQYGKGYVEAELDIKPDLFFFGCHFIGDPVMPGCLGLDAMWQLVGFYLGWIGGEGKGRALGVGEVKFTGQVLPTAKKVTYRIHLKRVINRKLIMGVADGEVEVDGRVIYTATDLKVGLFQDTSTF.

The active site involves His-76.

It belongs to the thioester dehydratase family. FabA subfamily. As to quaternary structure, homodimer.

The protein localises to the cytoplasm. The enzyme catalyses a (3R)-hydroxyacyl-[ACP] = a (2E)-enoyl-[ACP] + H2O. It carries out the reaction (3R)-hydroxydecanoyl-[ACP] = (2E)-decenoyl-[ACP] + H2O. It catalyses the reaction (2E)-decenoyl-[ACP] = (3Z)-decenoyl-[ACP]. It functions in the pathway lipid metabolism; fatty acid biosynthesis. Necessary for the introduction of cis unsaturation into fatty acids. Catalyzes the dehydration of (3R)-3-hydroxydecanoyl-ACP to E-(2)-decenoyl-ACP and then its isomerization to Z-(3)-decenoyl-ACP. Can catalyze the dehydratase reaction for beta-hydroxyacyl-ACPs with saturated chain lengths up to 16:0, being most active on intermediate chain length. The sequence is that of 3-hydroxydecanoyl-[acyl-carrier-protein] dehydratase from Actinobacillus succinogenes (strain ATCC 55618 / DSM 22257 / CCUG 43843 / 130Z).